A 341-amino-acid polypeptide reads, in one-letter code: MTYRDAGVDIDAGNALVERIKPLVKRSFRPEVMGGLGGFGALFDLSGKYKEPVLVSGTDGVGTKLKLAQQLGRHDTIGIDLVGMCVNDVLVQGAEPLFFLDYFATGKLDVDTAAAVVGGIARGCALSGCALIGGETAEMPDMYPPGEYDLAGFTVGAVEKSQLLDGAQVRDGDVLIGIASSGPHSNGYSLIRKIYERAGAPAEHVLDDGTKLIDALMAPTALYVKPVLALLKSHGQAIHAMAHITGGGLTENIIRVIPDGLGLDIDASAWTLPPVFAWLQREGAVADAEMWRTFNCGIGFVLIAAPAEAAALEQALDAQSLAHWRIGQVVPAHGDERVRID.

The protein belongs to the AIR synthase family.

The protein localises to the cytoplasm. The catalysed reaction is 2-formamido-N(1)-(5-O-phospho-beta-D-ribosyl)acetamidine + ATP = 5-amino-1-(5-phospho-beta-D-ribosyl)imidazole + ADP + phosphate + H(+). It participates in purine metabolism; IMP biosynthesis via de novo pathway; 5-amino-1-(5-phospho-D-ribosyl)imidazole from N(2)-formyl-N(1)-(5-phospho-D-ribosyl)glycinamide: step 2/2. This chain is Phosphoribosylformylglycinamidine cyclo-ligase, found in Xanthomonas oryzae pv. oryzae (strain MAFF 311018).